The primary structure comprises 330 residues: 2-oxoisovalerate dehydrogenase subunit alpha (330 aa).

Residues Phe44, Tyr73, 107–110, and Ser123 contribute to the substrate site; that span reads MPGH. Thiamine diphosphate is bound at residue 72-74; sequence YYR. Residues 123 to 125, 153 to 159, 183 to 187, and His252 each bind thiamine diphosphate; these read SPV, GEGSSNQ, and NKYAI. 3 residues coordinate Mg(2+): Glu154, Asn183, and Tyr185. The disordered stretch occupies residues 249 to 272; it reads LTPHSSDDDDSSYRGREEVEEAKK. Residues 259 to 272 are compositionally biased toward basic and acidic residues; the sequence is SSYRGREEVEEAKK.

Belongs to the BCKDHA family. In terms of assembly, heterotetramer of two alpha and two beta chains. Directly associated with ODBB in the E1 complex. Thiamine diphosphate is required as a cofactor.

It carries out the reaction N(6)-[(R)-lipoyl]-L-lysyl-[protein] + 3-methyl-2-oxobutanoate + H(+) = N(6)-[(R)-S(8)-2-methylpropanoyldihydrolipoyl]-L-lysyl-[protein] + CO2. The branched-chain alpha-keto dehydrogenase complex catalyzes the overall conversion of alpha-keto acids to acyl-CoA and CO(2). It contains multiple copies of three enzymatic components: branched-chain alpha-keto acid decarboxylase (E1), lipoamide acyltransferase (E2) and lipoamide dehydrogenase (E3). The sequence is that of 2-oxoisovalerate dehydrogenase subunit alpha (bfmBAA) from Bacillus subtilis (strain 168).